Reading from the N-terminus, the 324-residue chain is Melanoma-associated antigen B16 (324 aa).

Basic and acidic residues predominate over residues 1–15 (MSQDQESPRCTHDQH). 2 disordered regions span residues 1–22 (MSQDQESPRCTHDQHLQTFSET) and 39–108 (LSSS…PRNV). Residues 70–81 (SSSIAVTTTSSS) show a composition bias toward low complexity. Residues 82–95 (ESDEASSNQEEEDS) are compositionally biased toward acidic residues. An MAGE domain is found at 113–312 (LDQKVAFLVN…HSFPSQYAEA (200 aa)).

This chain is Melanoma-associated antigen B16 (MAGEB16), found in Homo sapiens (Human).